Consider the following 149-residue polypeptide: Ribosome maturation factor RimP (149 aa).

It belongs to the RimP family.

It is found in the cytoplasm. Functionally, required for maturation of 30S ribosomal subunits. This chain is Ribosome maturation factor RimP, found in Neisseria meningitidis serogroup A / serotype 4A (strain DSM 15465 / Z2491).